Here is a 192-residue protein sequence, read N- to C-terminus: uncharacterized protein (192 aa).

The 132-residue stretch at 29-160 (QRQAAVLVPI…PLDIHRRGND (132 aa)) folds into the Nudix hydrolase domain. The short motif at 67-89 (GAVDNTDATLIAAALREAQEEVA) is the Nudix box element. Mg(2+)-binding residues include Glu-83 and Glu-87.

Belongs to the Nudix hydrolase family. PCD1 subfamily. Mn(2+) is required as a cofactor. Requires Mg(2+) as cofactor.

Probably mediates the hydrolysis of some nucleoside diphosphate derivatives. This is an uncharacterized protein from Klebsiella pneumoniae subsp. pneumoniae (strain ATCC 700721 / MGH 78578).